Consider the following 168-residue polypeptide: Peptide deformylase 1 (168 aa).

Fe cation is bound by residues Cys-91 and His-133. The active site involves Glu-134. A Fe cation-binding site is contributed by His-137.

This sequence belongs to the polypeptide deformylase family. Requires Fe(2+) as cofactor.

It catalyses the reaction N-terminal N-formyl-L-methionyl-[peptide] + H2O = N-terminal L-methionyl-[peptide] + formate. Its function is as follows. Removes the formyl group from the N-terminal Met of newly synthesized proteins. Requires at least a dipeptide for an efficient rate of reaction. N-terminal L-methionine is a prerequisite for activity but the enzyme has broad specificity at other positions. This is Peptide deformylase 1 from Shewanella oneidensis (strain ATCC 700550 / JCM 31522 / CIP 106686 / LMG 19005 / NCIMB 14063 / MR-1).